The following is a 389-amino-acid chain: Cytochrome b (389 aa).

4 helical membrane passes run 32–52 (FGSL…FLAM), 76–98 (YILR…VHIG), 113–133 (LWSI…LGYV), and 179–199 (FFSL…AHMI). Heme b contacts are provided by histidine 82 and histidine 96. Residues histidine 183 and histidine 197 each contribute to the heme b site. Residue histidine 202 coordinates a ubiquinone. Helical transmembrane passes span 225–245 (FIFK…IIVF), 289–309 (LLGV…PFVD), 322–342 (INMV…LVGA), and 349–369 (FIFL…VIVP).

This sequence belongs to the cytochrome b family. As to quaternary structure, fungal cytochrome b-c1 complex contains 10 subunits; 3 respiratory subunits, 2 core proteins and 5 low-molecular weight proteins. Cytochrome b-c1 complex is a homodimer. It depends on heme b as a cofactor.

The protein localises to the mitochondrion inner membrane. In terms of biological role, component of the ubiquinol-cytochrome c reductase complex (complex III or cytochrome b-c1 complex) that is part of the mitochondrial respiratory chain. The b-c1 complex mediates electron transfer from ubiquinol to cytochrome c. Contributes to the generation of a proton gradient across the mitochondrial membrane that is then used for ATP synthesis. In Mycena viridimarginata, this protein is Cytochrome b (COB).